The sequence spans 691 residues: Elongation factor G (691 aa).

In terms of domain architecture, tr-type G spans E8 to I282. Residues A17–T24, D81–H85, and N135–D138 each bind GTP.

The protein belongs to the TRAFAC class translation factor GTPase superfamily. Classic translation factor GTPase family. EF-G/EF-2 subfamily.

The protein resides in the cytoplasm. Its function is as follows. Catalyzes the GTP-dependent ribosomal translocation step during translation elongation. During this step, the ribosome changes from the pre-translocational (PRE) to the post-translocational (POST) state as the newly formed A-site-bound peptidyl-tRNA and P-site-bound deacylated tRNA move to the P and E sites, respectively. Catalyzes the coordinated movement of the two tRNA molecules, the mRNA and conformational changes in the ribosome. The polypeptide is Elongation factor G (Synechococcus sp. (strain CC9902)).